The chain runs to 439 residues: Probable anion transporter 7 (439 aa).

Residues 1 to 28 (MTALTRMKFPKRYVIVLLTFICTNVCYI) form the signal peptide. A run of 11 helical transmembrane segments spans residues 53–73 (MILS…GWAA), 81–101 (VLLL…LDPK), 104–124 (VILV…FPAI), 143–163 (LTTS…PSLV), 167–187 (GAQS…VIWL), 232–252 (IIFS…HYAL), 280–300 (LPYF…DHLI), 312–332 (KLLN…LPLF), 338–358 (TVLC…GFAV), 367–387 (FAGI…IVGV), and 412–432 (TVFF…LIFS).

The protein belongs to the major facilitator superfamily. Sodium/anion cotransporter (TC 2.A.1.14) family.

The protein resides in the cell membrane. Probable anion transporter. This chain is Probable anion transporter 7 (PHT4;7), found in Oryza sativa subsp. japonica (Rice).